The chain runs to 137 residues: Small ribosomal subunit protein uS12 (137 aa).

The disordered stretch occupies residues 1–23 (MPTINQLVRKGRKSKSSKSDAPA). Residue Asp-102 is modified to 3-methylthioaspartic acid.

It belongs to the universal ribosomal protein uS12 family. In terms of assembly, part of the 30S ribosomal subunit. Contacts proteins S8 and S17. May interact with IF1 in the 30S initiation complex.

Its function is as follows. With S4 and S5 plays an important role in translational accuracy. In terms of biological role, interacts with and stabilizes bases of the 16S rRNA that are involved in tRNA selection in the A site and with the mRNA backbone. Located at the interface of the 30S and 50S subunits, it traverses the body of the 30S subunit contacting proteins on the other side and probably holding the rRNA structure together. The combined cluster of proteins S8, S12 and S17 appears to hold together the shoulder and platform of the 30S subunit. This Levilactobacillus brevis (strain ATCC 367 / BCRC 12310 / CIP 105137 / JCM 1170 / LMG 11437 / NCIMB 947 / NCTC 947) (Lactobacillus brevis) protein is Small ribosomal subunit protein uS12.